The following is a 414-amino-acid chain: Transforming growth factor beta-2 proprotein (414 aa).

Residues 1 to 20 (MHYCVLSAFLLLHLVTVALS) form the signal peptide. N-linked (GlcNAc...) asparagine glycosylation is found at Asn-72, Asn-140, and Asn-241. Cystine bridges form between Cys-309–Cys-318, Cys-317–Cys-380, Cys-346–Cys-411, and Cys-350–Cys-413.

Belongs to the TGF-beta family. Interacts with the serine proteases, HTRA1 and HTRA3. Interacts with ASPN. Interacts with MFAP5. As to quaternary structure, interacts with Transforming growth factor beta-2 (TGF-beta-2) chain; interaction is non-covalent and maintains (TGF-beta-2) in a latent state. Interacts with LRRC32/GARP; leading to regulate activation of TGF-beta-2. Interacts with NREP; the interaction results in a decrease in TGFB2 autoinduction. In terms of assembly, transforming growth factor beta-2: Homodimer; disulfide-linked. Transforming growth factor beta-2: Interacts with TGF-beta receptors (TGFBR1 and TGFBR2), leading to signal transduction. In terms of processing, the precursor proprotein is cleaved in the Golgi apparatus to form Transforming growth factor beta-2 (TGF-beta-2) and Latency-associated peptide (LAP) chains, which remain non-covalently linked, rendering TGF-beta-2 inactive.

It is found in the secreted. Its subcellular location is the extracellular space. The protein resides in the extracellular matrix. In terms of biological role, precursor of the Latency-associated peptide (LAP) and Transforming growth factor beta-2 (TGF-beta-2) chains, which constitute the regulatory and active subunit of TGF-beta-2, respectively. Required to maintain the Transforming growth factor beta-2 (TGF-beta-2) chain in a latent state during storage in extracellular matrix. Associates non-covalently with TGF-beta-2 and regulates its activation via interaction with 'milieu molecules', such as LTBP1 and LRRC32/GARP, that control activation of TGF-beta-2. Functionally, multifunctional protein that regulates various processes such as angiogenesis and heart development. Activation into mature form follows different steps: following cleavage of the proprotein in the Golgi apparatus, Latency-associated peptide (LAP) and Transforming growth factor beta-2 (TGF-beta-2) chains remain non-covalently linked rendering TGF-beta-2 inactive during storage in extracellular matrix. At the same time, LAP chain interacts with 'milieu molecules', such as LTBP1 and LRRC32/GARP, that control activation of TGF-beta-2 and maintain it in a latent state during storage in extracellular milieus. Once activated following release of LAP, TGF-beta-2 acts by binding to TGF-beta receptors (TGFBR1 and TGFBR2), which transduce signal. In Bos taurus (Bovine), this protein is Transforming growth factor beta-2 proprotein (TGFB2).